The following is a 249-amino-acid chain: tRNA (guanine-N(1)-)-methyltransferase (249 aa).

S-adenosyl-L-methionine contacts are provided by residues glycine 113 and 133 to 138 (IGDFVL).

It belongs to the RNA methyltransferase TrmD family. In terms of assembly, homodimer.

It localises to the cytoplasm. It catalyses the reaction guanosine(37) in tRNA + S-adenosyl-L-methionine = N(1)-methylguanosine(37) in tRNA + S-adenosyl-L-homocysteine + H(+). In terms of biological role, specifically methylates guanosine-37 in various tRNAs. This chain is tRNA (guanine-N(1)-)-methyltransferase, found in Aliivibrio fischeri (strain ATCC 700601 / ES114) (Vibrio fischeri).